A 27-amino-acid chain; its full sequence is Flagellar filament 34 kDa core protein (27 aa).

Belongs to the bacterial flagellin family. As to quaternary structure, the flagellum consists of an outer layer composed of repeating units of FlaA around a core that contains one or all of five antigenically related polypeptides.

It is found in the periplasmic flagellum. Its subcellular location is the periplasm. Its function is as follows. Component of the core of the flagella. This chain is Flagellar filament 34 kDa core protein, found in Spirochaeta aurantia.